Here is an 85-residue protein sequence, read N- to C-terminus: Three-finger toxin MALT0044C (85 aa).

The N-terminal stretch at 1 to 21 (MKTLLLTLVVVTIVCLDLGNT) is a signal peptide. 4 disulfides stabilise this stretch: cysteine 24-cysteine 45, cysteine 38-cysteine 63, cysteine 67-cysteine 78, and cysteine 79-cysteine 84.

Belongs to the three-finger toxin family. Short-chain subfamily. As to expression, expressed by the venom gland.

The protein resides in the secreted. The sequence is that of Three-finger toxin MALT0044C from Micrurus altirostris (Uruguayan coral snake).